Consider the following 89-residue polypeptide: Small ribosomal subunit protein bS20 (89 aa).

Over residues 1-12 the composition is skewed to basic residues; it reads MANIKSAKKRAK. The segment at 1-24 is disordered; that stretch reads MANIKSAKKRAKQTVVRNERNTGQ.

Belongs to the bacterial ribosomal protein bS20 family.

Functionally, binds directly to 16S ribosomal RNA. The sequence is that of Small ribosomal subunit protein bS20 from Xanthomonas campestris pv. campestris (strain 8004).